The primary structure comprises 606 residues: Chaperone protein DnaK (606 aa).

Thr-174 bears the Phosphothreonine; by autocatalysis mark. Residues 576–606 form a disordered region; the sequence is QAAGSANPGGSQGTSQGNVYEADYKVEDDNK. The segment covering 597-606 has biased composition (basic and acidic residues); the sequence is ADYKVEDDNK.

The protein belongs to the heat shock protein 70 family.

Its function is as follows. Acts as a chaperone. This chain is Chaperone protein DnaK, found in Caldanaerobacter subterraneus subsp. tengcongensis (strain DSM 15242 / JCM 11007 / NBRC 100824 / MB4) (Thermoanaerobacter tengcongensis).